Reading from the N-terminus, the 101-residue chain is MVKHSRGYRTRSRSLLRKSPRERGAVPSLSRLMVEYKEGDKVVIKINPSVHSGMPHRRYQGKVGKIIGKRGRAYLVSVTLGDKEKVIIVRPEHLVSFSSSG.

The segment covering M1–K18 has biased composition (basic residues). Residues M1–R23 form a disordered region.

Belongs to the eukaryotic ribosomal protein eL21 family.

This Saccharolobus islandicus (strain Y.N.15.51 / Yellowstone #2) (Sulfolobus islandicus) protein is Large ribosomal subunit protein eL21.